The sequence spans 355 residues: Protein RecA (355 aa).

Residue 67 to 74 participates in ATP binding; it reads GPESSGKT.

It belongs to the RecA family.

The protein localises to the cytoplasm. Can catalyze the hydrolysis of ATP in the presence of single-stranded DNA, the ATP-dependent uptake of single-stranded DNA by duplex DNA, and the ATP-dependent hybridization of homologous single-stranded DNAs. It interacts with LexA causing its activation and leading to its autocatalytic cleavage. This chain is Protein RecA, found in Shewanella halifaxensis (strain HAW-EB4).